Reading from the N-terminus, the 1058-residue chain is Carbamoyl phosphate synthase large chain (1058 aa).

The interval 1–401 (MPKRTDIKKI…SLLKACRSLE (401 aa)) is carboxyphosphate synthetic domain. Positions 129, 169, 175, 176, 208, 210, 215, 241, 242, 243, 284, and 298 each coordinate ATP. Residues 133-327 (KALMKALKQP…IAKIAAKIAI (195 aa)) form the ATP-grasp 1 domain. Gln-284, Glu-298, and Asn-300 together coordinate Mg(2+). The Mn(2+) site is built by Gln-284, Glu-298, and Asn-300. An oligomerization domain region spans residues 402-546 (IGIYHNECKE…YSTYAFENES (145 aa)). Positions 547–929 (QASPNKSILV…ALYKAFEASY (383 aa)) are carbamoyl phosphate synthetic domain. Residues 671–861 (EKALHDINIP…MAQVATKLIL (191 aa)) enclose the ATP-grasp 2 domain. ATP contacts are provided by Arg-707, Ser-746, Ile-748, Glu-752, Gly-777, Val-778, His-779, Ser-780, Gln-820, and Glu-832. Residues Gln-820, Glu-832, and Asn-834 each coordinate Mg(2+). 3 residues coordinate Mn(2+): Gln-820, Glu-832, and Asn-834. In terms of domain architecture, MGS-like spans 930–1058 (MHVPDFGNII…ESRSFSIQSL (129 aa)). Positions 930–1058 (MHVPDFGNII…ESRSFSIQSL (129 aa)) are allosteric domain.

Belongs to the CarB family. As to quaternary structure, composed of two chains; the small (or glutamine) chain promotes the hydrolysis of glutamine to ammonia, which is used by the large (or ammonia) chain to synthesize carbamoyl phosphate. Tetramer of heterodimers (alpha,beta)4. It depends on Mg(2+) as a cofactor. Requires Mn(2+) as cofactor.

The catalysed reaction is hydrogencarbonate + L-glutamine + 2 ATP + H2O = carbamoyl phosphate + L-glutamate + 2 ADP + phosphate + 2 H(+). It catalyses the reaction hydrogencarbonate + NH4(+) + 2 ATP = carbamoyl phosphate + 2 ADP + phosphate + 2 H(+). It participates in amino-acid biosynthesis; L-arginine biosynthesis; carbamoyl phosphate from bicarbonate: step 1/1. It functions in the pathway pyrimidine metabolism; UMP biosynthesis via de novo pathway; (S)-dihydroorotate from bicarbonate: step 1/3. In terms of biological role, large subunit of the glutamine-dependent carbamoyl phosphate synthetase (CPSase). CPSase catalyzes the formation of carbamoyl phosphate from the ammonia moiety of glutamine, carbonate, and phosphate donated by ATP, constituting the first step of 2 biosynthetic pathways, one leading to arginine and/or urea and the other to pyrimidine nucleotides. The large subunit (synthetase) binds the substrates ammonia (free or transferred from glutamine from the small subunit), hydrogencarbonate and ATP and carries out an ATP-coupled ligase reaction, activating hydrogencarbonate by forming carboxy phosphate which reacts with ammonia to form carbamoyl phosphate. In Streptococcus uberis (strain ATCC BAA-854 / 0140J), this protein is Carbamoyl phosphate synthase large chain.